The sequence spans 362 residues: Phosphoserine aminotransferase (362 aa).

Position 42 (R42) interacts with L-glutamate. Pyridoxal 5'-phosphate-binding positions include 76 to 77 (AR), W102, T153, D174, and Q197. The residue at position 198 (K198) is an N6-(pyridoxal phosphate)lysine. Pyridoxal 5'-phosphate is bound at residue 239–240 (NT).

It belongs to the class-V pyridoxal-phosphate-dependent aminotransferase family. SerC subfamily. Homodimer. Pyridoxal 5'-phosphate serves as cofactor.

The protein localises to the cytoplasm. It carries out the reaction O-phospho-L-serine + 2-oxoglutarate = 3-phosphooxypyruvate + L-glutamate. The enzyme catalyses 4-(phosphooxy)-L-threonine + 2-oxoglutarate = (R)-3-hydroxy-2-oxo-4-phosphooxybutanoate + L-glutamate. It participates in amino-acid biosynthesis; L-serine biosynthesis; L-serine from 3-phospho-D-glycerate: step 2/3. It functions in the pathway cofactor biosynthesis; pyridoxine 5'-phosphate biosynthesis; pyridoxine 5'-phosphate from D-erythrose 4-phosphate: step 3/5. In terms of biological role, catalyzes the reversible conversion of 3-phosphohydroxypyruvate to phosphoserine and of 3-hydroxy-2-oxo-4-phosphonooxybutanoate to phosphohydroxythreonine. In Xenorhabdus nematophila (strain ATCC 19061 / DSM 3370 / CCUG 14189 / LMG 1036 / NCIMB 9965 / AN6), this protein is Phosphoserine aminotransferase.